A 145-amino-acid polypeptide reads, in one-letter code: Large ribosomal subunit protein uL13 (145 aa).

The protein belongs to the universal ribosomal protein uL13 family. As to quaternary structure, part of the 50S ribosomal subunit.

Its function is as follows. This protein is one of the early assembly proteins of the 50S ribosomal subunit, although it is not seen to bind rRNA by itself. It is important during the early stages of 50S assembly. The chain is Large ribosomal subunit protein uL13 from Listeria monocytogenes serotype 4b (strain CLIP80459).